A 448-amino-acid polypeptide reads, in one-letter code: Divalent metal cation transporter MntH (448 aa).

The next 11 membrane-spanning stretches (helical) occupy residues 41–61, 69–89, 117–137, 147–167, 176–196, 215–235, 270–290, 307–327, 363–383, 384–404, and 424–444; these read LFAF…PGNW, SEFG…AVLL, GFVL…AEVI, FGIP…LVLF, IEVI…AEMV, IVTN…TVMP, FSLT…AAAF, LLNP…ALLA, VLAI…GINE, LLIF…IPLV, and IVSW…LFYT.

The protein belongs to the NRAMP family.

It localises to the cell membrane. Functionally, h(+)-stimulated, divalent metal cation uptake system. The protein is Divalent metal cation transporter MntH of Listeria innocua serovar 6a (strain ATCC BAA-680 / CLIP 11262).